Reading from the N-terminus, the 371-residue chain is Signal peptide peptidase-like 1 (371 aa).

Topologically, residues 1–6 are lumenal; sequence MESLWK. Residues 7–27 form a helical membrane-spanning segment; the sequence is LSYLLEPASLALILTAVSVAY. At 28–57 the chain is on the cytoplasmic side; the sequence is ASASRALDHGREMERNLDFSEASITLDRSQ. A helical membrane pass occupies residues 58–75; that stretch reads ALMIPLASSCSLLLMFYL. The Lumenal portion of the chain corresponds to 76 to 80; the sequence is FSSVS. The helical transmembrane segment at 81–103 threads the bilayer; sequence HLVTAFTAVASAMALFFCLSPYV. Over 104–123 the chain is Cytoplasmic; the sequence is NCVRSRLGVGDPFVSRCCSK. Residues 124–146 traverse the membrane as a helical segment; sequence PFTRLQGLLVAICVGTVVAWLVS. Residues 147 to 149 are Lumenal-facing; sequence GHW. The chain crosses the membrane as a helical span at residues 150 to 167; sequence LLNNLLGISICIAFVSHV. Topologically, residues 168–171 are cytoplasmic; sequence RLPN. A helical transmembrane segment spans residues 172-192; it reads IKICALLLVCLFVYDVFWVFF. The active site involves D186. Residues 193-258 lie on the Lumenal side of the membrane; that stretch reads SERFFGANVM…LAPGSSPGDY (66 aa). A helical transmembrane segment spans residues 259–279; sequence MMLGLGDMAIPGMLLALVLSF. D265 is an active-site residue. At 280-301 the chain is on the cytoplasmic side; the sequence is DHRKIKDMSVSQDMPPSKQRKY. The helical transmembrane segment at 302–322 threads the bilayer; that stretch reads VWYALTGYGVGLVTALAAGIL. The Lumenal portion of the chain corresponds to 323-326; the sequence is SQSP. A helical membrane pass occupies residues 327–347; sequence QPALLYLVPSTLGPVMYMSWL. The PAL motif lies at 328–330; it reads PAL. The Cytoplasmic segment spans residues 348 to 371; that stretch reads RNELWELWEGSRPIINDKAHLLEV.

It belongs to the peptidase A22B family.

It localises to the endosome membrane. In terms of biological role, intramembrane-cleaving aspartic protease (I-CLiP) that cleaves type II membrane signal peptides in the hydrophobic plane of the membrane. The protein is Signal peptide peptidase-like 1 (SPPL1) of Oryza sativa subsp. japonica (Rice).